The following is a 296-amino-acid chain: Probable deoxyuridine 5'-triphosphate nucleotidohydrolase (296 aa).

Residues Glu-66 to Gln-102 are a coiled coil.

It belongs to the dUTPase family.

The enzyme catalyses dUTP + H2O = dUMP + diphosphate + H(+). It functions in the pathway pyrimidine metabolism; dUMP biosynthesis; dUMP from dCTP (dUTP route): step 2/2. Its function is as follows. This enzyme is involved in nucleotide metabolism: it produces dUMP, the immediate precursor of thymidine nucleotides and it decreases the intracellular concentration of dUTP so that uracil cannot be incorporated into DNA. The polypeptide is Probable deoxyuridine 5'-triphosphate nucleotidohydrolase (Acheta domesticus (House cricket)).